Reading from the N-terminus, the 254-residue chain is Urease accessory protein UreF (254 aa).

The segment covering 1–11 (MDKGKSVKSTE) has biased composition (basic and acidic residues). Residues 1 to 25 (MDKGKSVKSTEKSVGIPPKTPKTDN) are disordered.

The protein belongs to the UreF family. As to quaternary structure, ureH, UreF and UreG form a complex that acts as a GTP-hydrolysis-dependent molecular chaperone, activating the urease apoprotein by helping to assemble the nickel containing metallocenter of UreC. The UreE protein probably delivers the nickel.

Its subcellular location is the cytoplasm. Its function is as follows. Required for maturation of urease via the functional incorporation of the urease nickel metallocenter. The sequence is that of Urease accessory protein UreF from Helicobacter pylori (strain P12).